The primary structure comprises 322 residues: D-alanine--D-alanine ligase (322 aa).

The 204-residue stretch at 108–311 (KEFYYNAELP…FPSLLDTLIE (204 aa)) folds into the ATP-grasp domain. Position 136-192 (136-192 (IEDLGLPLVVKPACAGSSIGISLAHTEEELLAGINHARDCSAGAIMVEQFIKGRELT)) interacts with ATP. Mg(2+)-binding residues include aspartate 265, glutamate 278, and asparagine 280.

The protein belongs to the D-alanine--D-alanine ligase family. It depends on Mg(2+) as a cofactor. Requires Mn(2+) as cofactor.

The protein localises to the cytoplasm. The catalysed reaction is 2 D-alanine + ATP = D-alanyl-D-alanine + ADP + phosphate + H(+). The protein operates within cell wall biogenesis; peptidoglycan biosynthesis. Functionally, cell wall formation. The sequence is that of D-alanine--D-alanine ligase from Desulfotalea psychrophila (strain LSv54 / DSM 12343).